We begin with the raw amino-acid sequence, 515 residues long: Slowpoke-binding protein (515 aa).

The tract at residues 1–31 (MFKFNKAAQQQRIDNRNSAVTGHDPFVRPPV) is disordered. The segment covering 7–20 (AAQQQRIDNRNSAV) has biased composition (polar residues). Phosphoserine occurs at positions 54 and 79. The segment covering 73–82 (SSNRSASSEQ) has biased composition (polar residues). A disordered region spans residues 73–94 (SSNRSASSEQDNSDLSEHSEKS). The tract at residues 191–203 (NWFLVTDASVRTD) is interaction with Slo. A disordered region spans residues 483-503 (SLSEANSPCTPPSTPHDRRTG).

As to quaternary structure, interacts specifically with Slo; which activates Slo activity. Interacts with 14-3-3-zeta when phosphorylated. Forms a heterotetrameric complex containing phosphorylated Slob, Slo and 14-3-3-zeta, which represses Slo activity due to the indirect interaction between Slo and 14-3-3-zeta. Post-translationally, phosphorylated. Phosphorylation of Ser-54 and Ser-79 is required for the interaction with 14-3-3-zeta but not with that of Slo. Expressed in head. In larval brain, it is expressed in the mushroom body. Also expressed in larval muscles.

It localises to the cytoplasm. Its function is as follows. Regulator of calcium-activated channel Slo. Increases or decreases the voltage sensitivity of Slo, depending on the absence or presence of 14-3-3-zeta in the complex, respectively. This Drosophila melanogaster (Fruit fly) protein is Slowpoke-binding protein (Slob).